The following is a 53-amino-acid chain: Large ribosomal subunit protein bL33A (53 aa).

Belongs to the bacterial ribosomal protein bL33 family.

The chain is Large ribosomal subunit protein bL33A (rpmG1) from Mycoplasma pneumoniae (strain ATCC 29342 / M129 / Subtype 1) (Mycoplasmoides pneumoniae).